A 390-amino-acid chain; its full sequence is Galactokinase (390 aa).

A substrate-binding site is contributed by 34–37 (EHTD). ATP contacts are provided by residues S68 and 122 to 128 (GSGLSSS). Residues S128 and E160 each coordinate Mg(2+). The active-site Proton acceptor is the D172. Residue Y221 coordinates substrate.

The protein belongs to the GHMP kinase family. GalK subfamily.

The protein resides in the cytoplasm. It carries out the reaction alpha-D-galactose + ATP = alpha-D-galactose 1-phosphate + ADP + H(+). Its pathway is carbohydrate metabolism; galactose metabolism. Its function is as follows. Catalyzes the transfer of the gamma-phosphate of ATP to D-galactose to form alpha-D-galactose-1-phosphate (Gal-1-P). The protein is Galactokinase of Chloroflexus aurantiacus (strain ATCC 29366 / DSM 635 / J-10-fl).